Consider the following 427-residue polypeptide: Acetyl-CoA acetyltransferase, mitochondrial (427 aa).

Residues 1–33 constitute a mitochondrion transit peptide; that stretch reads MAVLAALLRGGARSRSPLLRRLVQEIRYVERSY. The residue at position 66 (Lys-66) is an N6-acetyllysine; alternate. Lys-66 carries the post-translational modification N6-succinyllysine; alternate. Residue Lys-78 is modified to N6-succinyllysine. The active-site Acyl-thioester intermediate is Cys-126. N6-acetyllysine; alternate occurs at positions 174, 181, 190, and 202. An N6-succinyllysine; alternate mark is found at Lys-174, Lys-181, Lys-190, and Lys-202. Tyr-219 contributes to the CoA binding site. Residue Tyr-219 coordinates K(+). Lys-223 and Lys-230 each carry N6-acetyllysine; alternate. Lys-223 and Lys-230 each carry N6-succinyllysine; alternate. The residue at position 243 (Lys-243) is an N6-succinyllysine. An N6-acetyllysine mark is found at Lys-251 and Lys-257. Residues 258-260 and Lys-263 contribute to the CoA site; that span reads RVD. Lys-263 is modified (N6-acetyllysine; alternate). Residue Lys-263 is modified to N6-succinyllysine; alternate. Residues Lys-266 and Lys-268 each carry the N6-succinyllysine modification. Lys-273 is subject to N6-acetyllysine. Positions 280, 281, and 283 each coordinate K(+). Ser-284 lines the CoA pocket. Lys-338 carries the post-translational modification N6-acetyllysine. Val-381 serves as a coordination point for K(+). Cys-413 functions as the Proton donor/acceptor in the catalytic mechanism.

The protein belongs to the thiolase-like superfamily. Thiolase family. Homotetramer. Post-translationally, succinylation at Lys-268, adjacent to a coenzyme A binding site. Desuccinylated by SIRT5.

It localises to the mitochondrion. It catalyses the reaction 2 acetyl-CoA = acetoacetyl-CoA + CoA. The catalysed reaction is propanoyl-CoA + acetyl-CoA = 2-methyl-3-oxobutanoyl-CoA + CoA. The protein operates within lipid metabolism; fatty acid beta-oxidation. Its activity is regulated as follows. Activated by potassium ions, but not sodium ions. This is one of the enzymes that catalyzes the last step of the mitochondrial beta-oxidation pathway, an aerobic process breaking down fatty acids into acetyl-CoA. Using free coenzyme A/CoA, catalyzes the thiolytic cleavage of medium- to long-chain 3-oxoacyl-CoAs into acetyl-CoA and a fatty acyl-CoA shortened by two carbon atoms. The activity of the enzyme is reversible and it can also catalyze the condensation of two acetyl-CoA molecules into acetoacetyl-CoA. Thereby, it plays a major role in ketone body metabolism. The chain is Acetyl-CoA acetyltransferase, mitochondrial (ACAT1) from Macaca fascicularis (Crab-eating macaque).